We begin with the raw amino-acid sequence, 445 residues long: GTPase Der (445 aa).

2 consecutive EngA-type G domains span residues 3–167 (PVIA…YAGQ) and 180–353 (VKIA…AAAM). GTP is bound by residues 9 to 16 (GRPNVGKS), 56 to 60 (DTGGF), 119 to 122 (NKAE), 186 to 193 (GRPNVGKS), 233 to 237 (DTAGL), and 298 to 301 (NKWD). Residues 354 to 438 (AKLPTPKLTR…PLRIEFRSST (85 aa)) enclose the KH-like domain.

This sequence belongs to the TRAFAC class TrmE-Era-EngA-EngB-Septin-like GTPase superfamily. EngA (Der) GTPase family. Associates with the 50S ribosomal subunit.

Functionally, GTPase that plays an essential role in the late steps of ribosome biogenesis. This Paraburkholderia phytofirmans (strain DSM 17436 / LMG 22146 / PsJN) (Burkholderia phytofirmans) protein is GTPase Der.